The primary structure comprises 765 residues: 1,4-alpha-glucan branching enzyme GlgB (765 aa).

Asp-431 acts as the Nucleophile in catalysis. The active-site Proton donor is Glu-484.

Belongs to the glycosyl hydrolase 13 family. GlgB subfamily. Monomer.

The catalysed reaction is Transfers a segment of a (1-&gt;4)-alpha-D-glucan chain to a primary hydroxy group in a similar glucan chain.. Its pathway is glycan biosynthesis; glycogen biosynthesis. Functionally, catalyzes the formation of the alpha-1,6-glucosidic linkages in glycogen by scission of a 1,4-alpha-linked oligosaccharide from growing alpha-1,4-glucan chains and the subsequent attachment of the oligosaccharide to the alpha-1,6 position. The protein is 1,4-alpha-glucan branching enzyme GlgB of Synechococcus sp. (strain CC9311).